The sequence spans 190 residues: uncharacterized protein (190 aa).

An HTH tetR-type domain is found at 1 to 58 (MDKRILAETFRLIKQKGFSFTMNDLAAALGTSKRTLYAYYSSKDQLVEAVVEQFIAEM). Residues 21–40 (TMNDLAAALGTSKRTLYAYY) constitute a DNA-binding region (H-T-H motif).

This is an uncharacterized protein from Bacillus subtilis (strain 168).